A 504-amino-acid chain; its full sequence is Potassium voltage-gated channel subfamily V member 1 (504 aa).

Disordered stretches follow at residues 1–22 (MDLSPRNRPLLESSSLDSGGSL) and 172–193 (KKDTDDQESQHESEQDFSQGPC). The Cytoplasmic portion of the chain corresponds to 1 to 214 (MDLSPRNRPL…EKPGSSTAAR (214 aa)). The segment covering 10–22 (LLESSSLDSGGSL) has biased composition (low complexity). Residues 172 to 185 (KKDTDDQESQHESE) are compositionally biased toward basic and acidic residues. Residues 215–235 (IFGVISIIFVAVSIVNMALMS) traverse the membrane as a helical segment. Residues 236-242 (AELSWLN) are Extracellular-facing. Residues 243-263 (LQLLEILEYVCISWFTGEFIL) traverse the membrane as a helical segment. The Cytoplasmic portion of the chain corresponds to 264–280 (RFLCVKDRCRFLRKVPN). The chain crosses the membrane as a helical span at residues 281–301 (IIDLLAILPFYITLLVESLSG). Over 302–313 (SHTTQELENVGR) the chain is Extracellular. The helical; Voltage-sensor transmembrane segment at 314-335 (LVQVLRLLRALRMLKLGRHSTG) threads the bilayer. Over 336 to 349 (LRSLGMTITQCYEE) the chain is Cytoplasmic. Residues 350-370 (VGLLLLFLSVGISIFSTIEYF) form a helical membrane-spanning segment. Positions 396–401 (TVGYGD) match the Selectivity filter motif. A helical membrane pass occupies residues 411 to 431 (IVAFMCILSGILVLALPIAII). Topologically, residues 432–504 (NDRFSACYFT…RSSGGDDFWF (73 aa)) are cytoplasmic.

Belongs to the potassium channel family. V (TC 1.A.1.2) subfamily. Kv8.1/KCNV1 sub-subfamily. As to quaternary structure, heteromultimer with KCNB1 and KCNB2. Interacts with KCNC4 and KCND1. Detected in brain, throughout layers II, IV and VI of the brain cortex. Detected in cerebellum and hippocampus, in the granule cell layer, Purkinje cell layer, pyramidal cell layer and dentate gyrus. Detected at lower levels in olfactory bulb, amygdala, thalamus, hypothalamus, midbrain and brainstem.

It localises to the cell membrane. Its function is as follows. Potassium channel subunit that does not form functional channels by itself. Modulates KCNB1 and KCNB2 channel activity by shifting the threshold for inactivation to more negative values and by slowing the rate of inactivation. Can down-regulate the channel activity of KCNB1, KCNB2, KCNC4 and KCND1, possibly by trapping them in intracellular membranes. This Mesocricetus auratus (Golden hamster) protein is Potassium voltage-gated channel subfamily V member 1 (KCNV1).